A 29-amino-acid polypeptide reads, in one-letter code: RICPRILMECKADSDCLAQCICQENGFCG.

3 disulfide bridges follow: Cys-3–Cys-20, Cys-10–Cys-22, and Cys-16–Cys-28.

Belongs to the protease inhibitor I7 (squash-type serine protease inhibitor) family.

It localises to the secreted. Its function is as follows. Strongly inhibits trypsin, weakly inhibits chymotrypsin. This is Trypsin inhibitor 4 from Cyclanthera pedata (Achocha).